A 304-amino-acid chain; its full sequence is Choline-phosphate cytidylyltransferase 2 (304 aa).

CTP contacts are provided by residues 28-36 (IFDLFHFGH) and Lys-66. Substrate contacts are provided by Lys-66 and Trp-95. Residues 112–113 (HD), Tyr-117, and 142–146 (RTEGI) contribute to the CTP site. The disordered stretch occupies residues 266–292 (QNGLTISKDNDDEQMSDDNEFAEEDCV). Residues 275 to 291 (NDDEQMSDDNEFAEEDC) are compositionally biased toward acidic residues.

The protein belongs to the cytidylyltransferase family.

It catalyses the reaction phosphocholine + CTP + H(+) = CDP-choline + diphosphate. Its pathway is phospholipid metabolism; phosphatidylcholine biosynthesis; phosphatidylcholine from phosphocholine: step 1/2. In terms of biological role, plays an important role in the biosynthesis of the phospholipid phosphatidylcholine. Catalyzes the formation of CDP-choline. This is Choline-phosphate cytidylyltransferase 2 from Arabidopsis thaliana (Mouse-ear cress).